Consider the following 827-residue polypeptide: Tuftelin-interacting protein 11 (827 aa).

2 disordered regions span residues 31 to 129 (FNPH…KGFV) and 179 to 203 (QRKGKGAVGAYGSERTSQSLQDFPV). A compositionally biased stretch (basic and acidic residues) spans 41-60 (TKEEATYGVWAERDSDEERP). Acidic residues predominate over residues 88–98 (DVSDEDSDEDE). Basic and acidic residues predominate over residues 99-112 (KPVKQEEIPKEFVP). Positions 145–191 (TKGIGQKLLQKMGYVPGRGLGKNAQGIINPIEAKQRKGKGAVGAYGS) constitute a G-patch domain.

Belongs to the TFP11/STIP family. In terms of assembly, identified in the spliceosome C complex.

The protein localises to the nucleus. Involved in pre-mRNA splicing, specifically in spliceosome disassembly during late-stage splicing events. The sequence is that of Tuftelin-interacting protein 11 (TFIP11) from Gallus gallus (Chicken).